An 876-amino-acid chain; its full sequence is Leucine--tRNA ligase (876 aa).

Positions 42–52 (PYPSGKLHMGH) match the 'HIGH' region motif. The 'KMSKS' region motif lies at 634 to 638 (KMSKS). Lys-637 serves as a coordination point for ATP.

Belongs to the class-I aminoacyl-tRNA synthetase family.

It localises to the cytoplasm. It carries out the reaction tRNA(Leu) + L-leucine + ATP = L-leucyl-tRNA(Leu) + AMP + diphosphate. The sequence is that of Leucine--tRNA ligase from Neisseria gonorrhoeae (strain NCCP11945).